Here is a 353-residue protein sequence, read N- to C-terminus: Photosystem II protein D1 (353 aa).

T2 carries the N-acetylthreonine modification. T2 is modified (phosphothreonine). 3 helical membrane-spanning segments follow: residues 29 to 46 (YIGWFGVLMIPTLLTATS), 118 to 133 (HFLLGVACYMGREWEL), and 142 to 156 (WIAVAYSAPVAAATA). H118 is a binding site for chlorophyll a. Pheophytin a is bound at residue Y126. Residues D170 and E189 each contribute to the [CaMn4O5] cluster site. The chain crosses the membrane as a helical span at residues 197 to 218 (FHMLGVAGVFGGSLFSAMHGSL). H198 is a binding site for chlorophyll a. Residues H215 and 264-265 (SF) contribute to the a quinone site. H215 is a Fe cation binding site. H272 lines the Fe cation pocket. Residues 274–288 (FLTAWPVVGIWFTAL) traverse the membrane as a helical segment. The [CaMn4O5] cluster site is built by H332, E333, D342, and A344. Positions 345 to 353 (AVEAPSTNG) are excised as a propeptide.

The protein belongs to the reaction center PufL/M/PsbA/D family. As to quaternary structure, PSII is composed of 1 copy each of membrane proteins PsbA, PsbB, PsbC, PsbD, PsbE, PsbF, PsbH, PsbI, PsbJ, PsbK, PsbL, PsbM, PsbT, PsbX, PsbY, PsbZ, Psb30/Ycf12, at least 3 peripheral proteins of the oxygen-evolving complex and a large number of cofactors. It forms dimeric complexes. Requires The D1/D2 heterodimer binds P680, chlorophylls that are the primary electron donor of PSII, and subsequent electron acceptors. It shares a non-heme iron and each subunit binds pheophytin, quinone, additional chlorophylls, carotenoids and lipids. D1 provides most of the ligands for the Mn4-Ca-O5 cluster of the oxygen-evolving complex (OEC). There is also a Cl(-1) ion associated with D1 and D2, which is required for oxygen evolution. The PSII complex binds additional chlorophylls, carotenoids and specific lipids. as cofactor. In terms of processing, tyr-161 forms a radical intermediate that is referred to as redox-active TyrZ, YZ or Y-Z. C-terminally processed by CTPA; processing is essential to allow assembly of the oxygen-evolving complex and thus photosynthetic growth.

It localises to the plastid. The protein resides in the chloroplast thylakoid membrane. The enzyme catalyses 2 a plastoquinone + 4 hnu + 2 H2O = 2 a plastoquinol + O2. Functionally, photosystem II (PSII) is a light-driven water:plastoquinone oxidoreductase that uses light energy to abstract electrons from H(2)O, generating O(2) and a proton gradient subsequently used for ATP formation. It consists of a core antenna complex that captures photons, and an electron transfer chain that converts photonic excitation into a charge separation. The D1/D2 (PsbA/PsbD) reaction center heterodimer binds P680, the primary electron donor of PSII as well as several subsequent electron acceptors. In Barbarea verna (Land cress), this protein is Photosystem II protein D1.